We begin with the raw amino-acid sequence, 554 residues long: Putative acyl-coenzyme A synthetase (554 aa).

195-206 contributes to the AMP binding site; that stretch reads LLYSSGTTGPPK.

This sequence belongs to the ATP-dependent AMP-binding enzyme family.

This is Putative acyl-coenzyme A synthetase from Emericella nidulans (strain FGSC A4 / ATCC 38163 / CBS 112.46 / NRRL 194 / M139) (Aspergillus nidulans).